A 636-amino-acid chain; its full sequence is DNA-directed RNA polymerase subunit beta' (636 aa).

Residues Cys-70, Cys-72, Cys-85, and Cys-88 each coordinate Zn(2+). Mg(2+) is bound by residues Asp-471, Asp-473, and Asp-475.

This sequence belongs to the RNA polymerase beta' chain family. RpoC1 subfamily. It depends on Mg(2+) as a cofactor. Requires Zn(2+) as cofactor.

It is found in the plastid. It localises to the cyanelle. The catalysed reaction is RNA(n) + a ribonucleoside 5'-triphosphate = RNA(n+1) + diphosphate. DNA-dependent RNA polymerase catalyzes the transcription of DNA into RNA using the four ribonucleoside triphosphates as substrates. This Cyanophora paradoxa protein is DNA-directed RNA polymerase subunit beta'.